The following is a 69-amino-acid chain: uncharacterized protein (69 aa).

Residues 5–60 (IREHRKELGLTQEELAERVGVTRQTIIALEKGRYSPSLILAHRIARALGREHIEDI) form the HTH cro/C1-type domain. A DNA-binding region (H-T-H motif) is located at residues 16 to 35 (QEELAERVGVTRQTIIALEK).

This is an uncharacterized protein from Methanothermobacter thermautotrophicus (strain ATCC 29096 / DSM 1053 / JCM 10044 / NBRC 100330 / Delta H) (Methanobacterium thermoautotrophicum).